A 334-amino-acid polypeptide reads, in one-letter code: D-alanine--D-alanine ligase (334 aa).

One can recognise an ATP-grasp domain in the interval 121 to 327 (KLWYDALDIP…FSEFLVQCVT (207 aa)). 151-206 (AFGHWGSIFVKAARQGSSVGCYKVTTEDQIAPAIEAAFGFSEQVLVEQAVKPRELE) is an ATP binding site. Positions 281, 294, and 296 each coordinate Mg(2+).

This sequence belongs to the D-alanine--D-alanine ligase family. The cofactor is Mg(2+). Mn(2+) is required as a cofactor.

Its subcellular location is the cytoplasm. It catalyses the reaction 2 D-alanine + ATP = D-alanyl-D-alanine + ADP + phosphate + H(+). The protein operates within cell wall biogenesis; peptidoglycan biosynthesis. Functionally, cell wall formation. The protein is D-alanine--D-alanine ligase of Vibrio cholerae serotype O1 (strain ATCC 39315 / El Tor Inaba N16961).